Here is a 122-residue protein sequence, read N- to C-terminus: Small ribosomal subunit protein uS13 (122 aa).

Positions 93–122 are disordered; it reads RLSLPVRGQRTKTNSRTRKGKRKTVAGKKK. Residues 101–122 are compositionally biased toward basic residues; sequence QRTKTNSRTRKGKRKTVAGKKK.

The protein belongs to the universal ribosomal protein uS13 family. In terms of assembly, part of the 30S ribosomal subunit. Forms a loose heterodimer with protein S19. Forms two bridges to the 50S subunit in the 70S ribosome.

Located at the top of the head of the 30S subunit, it contacts several helices of the 16S rRNA. In the 70S ribosome it contacts the 23S rRNA (bridge B1a) and protein L5 of the 50S subunit (bridge B1b), connecting the 2 subunits; these bridges are implicated in subunit movement. Contacts the tRNAs in the A and P-sites. In Chlamydia abortus (strain DSM 27085 / S26/3) (Chlamydophila abortus), this protein is Small ribosomal subunit protein uS13.